The primary structure comprises 350 residues: Phenylalanine--tRNA ligase alpha subunit (350 aa).

Residue Glu-260 participates in Mg(2+) binding.

Belongs to the class-II aminoacyl-tRNA synthetase family. Phe-tRNA synthetase alpha subunit type 1 subfamily. As to quaternary structure, tetramer of two alpha and two beta subunits. It depends on Mg(2+) as a cofactor.

Its subcellular location is the cytoplasm. It carries out the reaction tRNA(Phe) + L-phenylalanine + ATP = L-phenylalanyl-tRNA(Phe) + AMP + diphosphate + H(+). This Mycoplasma capricolum subsp. capricolum (strain California kid / ATCC 27343 / NCTC 10154) protein is Phenylalanine--tRNA ligase alpha subunit.